Reading from the N-terminus, the 315-residue chain is Olfactory receptor 4A8 (315 aa).

Residues 1 to 24 (MRQNNNITEFVLLGFSQYPDVQNA) lie on the Extracellular side of the membrane. N-linked (GlcNAc...) asparagine glycosylation is present at N6. Residues 25 to 45 (LFVMFLLIYIVTMVGNLLIVV) traverse the membrane as a helical segment. Residues 46–57 (SIIASPFLGSPV) are Cytoplasmic-facing. A helical membrane pass occupies residues 58-80 (YFFLACLSFIDAVYSTTISPVLI). At 81-95 (VDLLCDKKTISFPAC) the chain is on the extracellular side. C95 and C177 form a disulfide bridge. The chain crosses the membrane as a helical span at residues 96 to 116 (MGQLFIEHLFGDTDVFLLVVM). The Cytoplasmic portion of the chain corresponds to 117–139 (AYDRYVATCKPLRYLTIMNRQVC). Residues 140–160 (ILLLVVAVTGGFLHSVFQILV) form a helical membrane-spanning segment. At 161–193 (VYSLPFCGPNVIYHFFCNIYPLLDLECTDTYFV) the chain is on the extracellular side. Residues 194-214 (GLAVVFNGGAICMVIFTLLLI) traverse the membrane as a helical segment. The Cytoplasmic portion of the chain corresponds to 215–235 (SYGVILNSLKTYSPEGRHKAP). A helical transmembrane segment spans residues 236–256 (FICSSHFIMVILFFVPCIFLY). Over 257-266 (VRPVSNFPID) the chain is Extracellular. The chain crosses the membrane as a helical span at residues 267–287 (KFLTVFYSVITPKLNPFIYML). Over 288 to 315 (RNSEMRNAIENLLGYQSGKTGFRCSKLN) the chain is Cytoplasmic.

The protein belongs to the G-protein coupled receptor 1 family.

Its subcellular location is the cell membrane. Its function is as follows. Odorant receptor. This is Olfactory receptor 4A8 (OR4A8) from Homo sapiens (Human).